Here is a 209-residue protein sequence, read N- to C-terminus: Holliday junction branch migration complex subunit RuvA (209 aa).

The domain I stretch occupies residues 1 to 64 (MIGRIRGMLI…EDAQSLYGFA (64 aa)). Residues 65–143 (SRLDRNLFRL…QLEGQFVPSQ (79 aa)) form a domain II region. The flexible linker stretch occupies residues 144–157 (PDVPTGAGAATASQ). Residues 158 to 209 (AGPDPREEAEAALIALGYKPQEAAKAISKVAGPDMNSETLIRLALKNMIPAG) form a domain III region.

The protein belongs to the RuvA family. In terms of assembly, homotetramer. Forms an RuvA(8)-RuvB(12)-Holliday junction (HJ) complex. HJ DNA is sandwiched between 2 RuvA tetramers; dsDNA enters through RuvA and exits via RuvB. An RuvB hexamer assembles on each DNA strand where it exits the tetramer. Each RuvB hexamer is contacted by two RuvA subunits (via domain III) on 2 adjacent RuvB subunits; this complex drives branch migration. In the full resolvosome a probable DNA-RuvA(4)-RuvB(12)-RuvC(2) complex forms which resolves the HJ.

The protein localises to the cytoplasm. Its function is as follows. The RuvA-RuvB-RuvC complex processes Holliday junction (HJ) DNA during genetic recombination and DNA repair, while the RuvA-RuvB complex plays an important role in the rescue of blocked DNA replication forks via replication fork reversal (RFR). RuvA specifically binds to HJ cruciform DNA, conferring on it an open structure. The RuvB hexamer acts as an ATP-dependent pump, pulling dsDNA into and through the RuvAB complex. HJ branch migration allows RuvC to scan DNA until it finds its consensus sequence, where it cleaves and resolves the cruciform DNA. In Marinobacter nauticus (strain ATCC 700491 / DSM 11845 / VT8) (Marinobacter aquaeolei), this protein is Holliday junction branch migration complex subunit RuvA.